A 135-amino-acid chain; its full sequence is Putative large ribosomal subunit protein eL32' (135 aa).

The protein belongs to the eukaryotic ribosomal protein eL32 family.

The polypeptide is Putative large ribosomal subunit protein eL32' (Rpl32-ps) (Mus musculus (Mouse)).